The sequence spans 142 residues: Transcriptional regulator MraZ (142 aa).

SpoVT-AbrB domains lie at 5 to 51 (ASAL…PRPE) and 77 to 120 (AMDV…DAQT).

The protein belongs to the MraZ family. As to quaternary structure, forms oligomers.

The protein resides in the cytoplasm. Its subcellular location is the nucleoid. This chain is Transcriptional regulator MraZ, found in Paraburkholderia xenovorans (strain LB400).